The following is a 723-amino-acid chain: BTB/POZ domain-containing protein 18 (723 aa).

The BTB domain maps to 34–102 (CDALLQAEGE…LYTSEMEVSQ (69 aa)). Disordered stretches follow at residues 150–176 (APISARVVGPKSRPQTPLPVTQTPSPL), 188–350 (EGAH…EEGQ), and 370–394 (EPPLRNTQDSPQILEPSDVEEPSGT). Composition is skewed to polar residues over residues 162 to 174 (RPQTPLPVTQTPS) and 195 to 205 (NLPNADSLSDT). Composition is skewed to low complexity over residues 217-227 (QESRSSPSSQR) and 271-286 (TSTPSSILSGPSSMPT). Basic and acidic residues-rich tracts occupy residues 303–312 (QGVDKQKPGE) and 327–336 (KPAENKKQSP). Serine 414 is modified (phosphoserine). The tract at residues 603–637 (TPDLEITSSQPLDGQGEKLLHFDSSDPSQRSYNHL) is disordered. Basic and acidic residues predominate over residues 617–626 (QGEKLLHFDS). The span at 627–636 (SDPSQRSYNH) shows a compositional bias: polar residues. 2 positions are modified to phosphoserine: serine 682 and serine 683. The tract at residues 699–723 (LGPTSVPSVWPDPSSESETEVDILT) is disordered. Residues 713–723 (SESETEVDILT) show a composition bias toward acidic residues.

Expressed in testis.

The protein resides in the nucleus. Its function is as follows. Specifically required during spermatogenesis to promote expression of piRNA precursors. The piRNA metabolic process mediates the repression of transposable elements during meiosis by forming complexes composed of piRNAs and Piwi proteins and governs the methylation and subsequent repression of transposons, which is essential for the germline integrity. Acts by facilitating transcription elongation at piRNA loci during pachytene. The chain is BTB/POZ domain-containing protein 18 from Mus musculus (Mouse).